The primary structure comprises 378 residues: Erythronate-4-phosphate dehydrogenase (378 aa).

2 residues coordinate substrate: S45 and T66. The NAD(+) site is built by D142 and T169. The active site involves R202. Residue D226 coordinates NAD(+). The active site involves E231. H248 serves as the catalytic Proton donor. Position 251 (G251) interacts with NAD(+). Substrate is bound at residue Y252.

The protein belongs to the D-isomer specific 2-hydroxyacid dehydrogenase family. PdxB subfamily. In terms of assembly, homodimer.

It is found in the cytoplasm. The catalysed reaction is 4-phospho-D-erythronate + NAD(+) = (R)-3-hydroxy-2-oxo-4-phosphooxybutanoate + NADH + H(+). It participates in cofactor biosynthesis; pyridoxine 5'-phosphate biosynthesis; pyridoxine 5'-phosphate from D-erythrose 4-phosphate: step 2/5. Its function is as follows. Catalyzes the oxidation of erythronate-4-phosphate to 3-hydroxy-2-oxo-4-phosphonooxybutanoate. This is Erythronate-4-phosphate dehydrogenase from Cellvibrio japonicus (strain Ueda107) (Pseudomonas fluorescens subsp. cellulosa).